The sequence spans 111 residues: Putative pterin-4-alpha-carbinolamine dehydratase (111 aa).

Belongs to the pterin-4-alpha-carbinolamine dehydratase family.

It catalyses the reaction (4aS,6R)-4a-hydroxy-L-erythro-5,6,7,8-tetrahydrobiopterin = (6R)-L-erythro-6,7-dihydrobiopterin + H2O. The chain is Putative pterin-4-alpha-carbinolamine dehydratase from Chlorobaculum tepidum (strain ATCC 49652 / DSM 12025 / NBRC 103806 / TLS) (Chlorobium tepidum).